The sequence spans 569 residues: Rab GTPase-binding effector protein 2 (569 aa).

Disordered regions lie at residues 1–41 (MAAA…GELS), 180–265 (IQRR…ETAS), and 388–411 (RAEQ…ESLP). Ala2 carries the post-translational modification N-acetylalanine. Positions 34-187 (EAESGELSRL…QEIQRRPRHA (154 aa)) form a coiled coil. A phosphoserine mark is found at Ser189 and Ser193. A Phosphoserine; by GSK3-alpha modification is found at Ser200. Residue Ser204 is modified to Phosphoserine. Low complexity-rich tracts occupy residues 245 to 257 (SSSS…QGLS) and 393 to 403 (PSSAPQGSQQE). The stretch at 289-523 (DTQWEQLQTE…LQAELETSEQ (235 aa)) forms a coiled coil.

It belongs to the rabaptin family. As to quaternary structure, heterodimer with RABGEF1. The dimer binds RAB5A that has been activated by GTP-binding. Interacts with SDCCAG8; this interaction is important for ciliogenesis regulation. Interacts with RAB4A; this interaction may mediate VEGFR2 cell surface expression.

It is found in the cytoplasm. The protein resides in the early endosome. The protein localises to the cytoskeleton. Its subcellular location is the microtubule organizing center. It localises to the centrosome. It is found in the cilium basal body. Its function is as follows. Plays a role in membrane trafficking and in homotypic early endosome fusion. Participates in arteriogenesis by regulating vascular endothelial growth factor receptor 2/VEGFR2 cell surface expression and endosomal trafficking. By interacting with SDCCAG8, localizes to centrosomes and plays a critical role in ciliogenesis. This Homo sapiens (Human) protein is Rab GTPase-binding effector protein 2 (RABEP2).